We begin with the raw amino-acid sequence, 712 residues long: Polyribonucleotide nucleotidyltransferase (712 aa).

Residues Asp-487 and Asp-493 each coordinate Mg(2+). The region spanning Pro-554–Ile-613 is the KH domain. One can recognise an S1 motif domain in the interval Gly-623–Lys-691.

The protein belongs to the polyribonucleotide nucleotidyltransferase family. Mg(2+) serves as cofactor.

The protein resides in the cytoplasm. It catalyses the reaction RNA(n+1) + phosphate = RNA(n) + a ribonucleoside 5'-diphosphate. Involved in mRNA degradation. Catalyzes the phosphorolysis of single-stranded polyribonucleotides processively in the 3'- to 5'-direction. This is Polyribonucleotide nucleotidyltransferase from Bacillus cereus (strain ATCC 10987 / NRS 248).